A 230-amino-acid polypeptide reads, in one-letter code: Ribonuclease 3 (230 aa).

Positions 5–134 constitute an RNase III domain; the sequence is EALLKSSFAI…FLGALLLDKG (130 aa). Position 47 (glutamate 47) interacts with Mg(2+). Residue aspartate 51 is part of the active site. 2 residues coordinate Mg(2+): aspartate 120 and glutamate 123. Glutamate 123 is an active-site residue. The region spanning 160-229 is the DRBM domain; sequence DYKTSLQEIL…AENALKALSE (70 aa).

This sequence belongs to the ribonuclease III family. In terms of assembly, homodimer. Mg(2+) is required as a cofactor.

It is found in the cytoplasm. The enzyme catalyses Endonucleolytic cleavage to 5'-phosphomonoester.. Digests double-stranded RNA. Involved in the processing of primary rRNA transcript to yield the immediate precursors to the large and small rRNAs (23S and 16S). Processes some mRNAs, and tRNAs when they are encoded in the rRNA operon. Processes pre-crRNA and tracrRNA of type II CRISPR loci if present in the organism. This Streptococcus uberis (strain ATCC BAA-854 / 0140J) protein is Ribonuclease 3.